Reading from the N-terminus, the 372-residue chain is MKKKALITGVTGQDGSYLAEFLLAKGYEVHGIKRRASSFNTQRVDHIYQDPHVDNASFILHYGDLTDSSNLTRILQEVKPDEVYNLGAQSHVAVSFESPEYTADVDAMGTLRLLEAIRLLGLEKTTKFYQASTSELYGLVQETPQKETTPFYPRSPYAVAKMYAYWIVVNYRESYGMYACNGILFNHESPRRGETFVTRKITRGLANIAQGLEKCLYMGNMDALRDWGHAKDYVRMQWMMLQQDQPEDFVIATGVQYSVRQFIEWSAKELGVTLTFEGQGVDEKGIVTAIEGDKAPALKVGDVVVQIDPRYFRPAEVETLLGDPSKAKQKLGWTPEITVQEMCAEMVMEDLKVAQRHALLKLHGHDVPVSVE.

NADP(+) is bound by residues 9-14 (GVTGQD), 64-65 (DL), 86-90 (LGAQS), and Y101. The active site involves T133. Residues E135 and Y157 each act as nucleophile in the active site. Positions 161, 187, and 192 each coordinate NADP(+).

The protein belongs to the NAD(P)-dependent epimerase/dehydratase family. GDP-mannose 4,6-dehydratase subfamily. NADP(+) serves as cofactor.

It catalyses the reaction GDP-alpha-D-mannose = GDP-4-dehydro-alpha-D-rhamnose + H2O. Its pathway is nucleotide-sugar biosynthesis; GDP-L-fucose biosynthesis via de novo pathway; GDP-L-fucose from GDP-alpha-D-mannose: step 1/2. In terms of biological role, catalyzes the conversion of GDP-D-mannose to GDP-4-dehydro-6-deoxy-D-mannose. The sequence is that of GDP-mannose 4,6-dehydratase from Vibrio cholerae.